The primary structure comprises 338 residues: Heme-dependent oxidative N-demethylase alpha subunit (338 aa).

2 residues coordinate heme b: Tyr-38 and His-194. Residue Arg-224 is the Proton donor of the active site. Asn-226 is a heme b binding site. Position 266 (Glu-266) interacts with dimethylamine. Tyr-317 and Lys-318 together coordinate heme b.

In terms of assembly, the heme-dependent oxidative N-demethylase (HODM) is a heterotetramer composed of a catalytic alpha subunit, a FMN/2Fe-2S-dependent oxidoreductase beta subunit, a gamma subunit with putative aminotransferase activity, and a delta subunit of unknown function.

The catalysed reaction is dimethylamine + NADPH + O2 + H(+) = methylamine + formaldehyde + NADP(+) + H2O. Component of the heme-dependent oxidative N-demethylase (HODM) enzyme, that catalyzes the NADPH-dependent oxidation of dimethylamine (DMA) to methylamine (MA) and formaldehyde. Functions in bacterial methylated amine catabolism, linking alkylamine oxidation to the tetrahydrofolate C1 pool. The alpha subunit of HODM binds heme, oxygen and DMA, and serves as the site of the oxidative N-demethylase activity. This chain is Heme-dependent oxidative N-demethylase alpha subunit, found in Ectopseudomonas mendocina (strain ymp) (Pseudomonas mendocina).